The following is a 259-amino-acid chain: Phosphate import ATP-binding protein PstB (259 aa).

The region spanning 2–248 (GQRIDVNHEN…ITMFNNPQNE (247 aa)) is the ABC transporter domain. Residue 37 to 44 (GPSGCGKS) coordinates ATP.

Belongs to the ABC transporter superfamily. Phosphate importer (TC 3.A.1.7) family. In terms of assembly, the complex is composed of two ATP-binding proteins (PstB), two transmembrane proteins (PstC and PstA) and a solute-binding protein (PstS).

Its subcellular location is the cell membrane. It carries out the reaction phosphate(out) + ATP + H2O = ADP + 2 phosphate(in) + H(+). Functionally, part of the ABC transporter complex PstSACB involved in phosphate import. Responsible for energy coupling to the transport system. The polypeptide is Phosphate import ATP-binding protein PstB (Bifidobacterium longum (strain NCC 2705)).